We begin with the raw amino-acid sequence, 336 residues long: Methionine synthase (336 aa).

Zn(2+)-binding residues include His210, Cys212, Glu234, and Cys294.

It belongs to the archaeal MetE family. Zn(2+) serves as cofactor.

Its pathway is amino-acid biosynthesis; L-methionine biosynthesis via de novo pathway. Catalyzes the transfer of a methyl group to L-homocysteine resulting in methionine formation. The physiological methyl donor is unknown. The polypeptide is Methionine synthase (Thermococcus kodakarensis (strain ATCC BAA-918 / JCM 12380 / KOD1) (Pyrococcus kodakaraensis (strain KOD1))).